Here is a 347-residue protein sequence, read N- to C-terminus: NADH-ubiquinone oxidoreductase chain 2 (347 aa).

Helical transmembrane passes span 4–21, 26–44, 59–79, 93–115, 149–169, 178–198, 200–220, 241–261, 274–294, and 323–343; these read LALI…VIVM, WLLV…IPVL, YFLT…TNLL, LAST…HFWV, LNLN…GWGG, ILAY…TYNP, LTLL…MLFM, ATSV…SGFL, ESIF…YFYM, and TPLL…APIL.

The protein belongs to the complex I subunit 2 family. Core subunit of respiratory chain NADH dehydrogenase (Complex I) which is composed of 45 different subunits. Interacts with TMEM242.

The protein localises to the mitochondrion inner membrane. It catalyses the reaction a ubiquinone + NADH + 5 H(+)(in) = a ubiquinol + NAD(+) + 4 H(+)(out). In terms of biological role, core subunit of the mitochondrial membrane respiratory chain NADH dehydrogenase (Complex I) which catalyzes electron transfer from NADH through the respiratory chain, using ubiquinone as an electron acceptor. Essential for the catalytic activity and assembly of complex I. This chain is NADH-ubiquinone oxidoreductase chain 2, found in Cardioderma cor (Heart-nosed bat).